We begin with the raw amino-acid sequence, 151 residues long: Prefoldin subunit alpha (151 aa).

Belongs to the prefoldin subunit alpha family. Heterohexamer of two alpha and four beta subunits.

Its subcellular location is the cytoplasm. In terms of biological role, molecular chaperone capable of stabilizing a range of proteins. Seems to fulfill an ATP-independent, HSP70-like function in archaeal de novo protein folding. In Aeropyrum pernix (strain ATCC 700893 / DSM 11879 / JCM 9820 / NBRC 100138 / K1), this protein is Prefoldin subunit alpha (pfdA).